Reading from the N-terminus, the 315-residue chain is Ribose-phosphate pyrophosphokinase (315 aa).

ATP is bound by residues 37 to 39 (DGE) and 96 to 97 (RQ). Positions 131 and 170 each coordinate Mg(2+). Lys-194 is an active-site residue. Residues Arg-196, Asp-220, and 224–228 (DTGGT) each bind D-ribose 5-phosphate.

This sequence belongs to the ribose-phosphate pyrophosphokinase family. Class I subfamily. Homohexamer. Mg(2+) is required as a cofactor.

It is found in the cytoplasm. The enzyme catalyses D-ribose 5-phosphate + ATP = 5-phospho-alpha-D-ribose 1-diphosphate + AMP + H(+). It participates in metabolic intermediate biosynthesis; 5-phospho-alpha-D-ribose 1-diphosphate biosynthesis; 5-phospho-alpha-D-ribose 1-diphosphate from D-ribose 5-phosphate (route I): step 1/1. In terms of biological role, involved in the biosynthesis of the central metabolite phospho-alpha-D-ribosyl-1-pyrophosphate (PRPP) via the transfer of pyrophosphoryl group from ATP to 1-hydroxyl of ribose-5-phosphate (Rib-5-P). This is Ribose-phosphate pyrophosphokinase from Yersinia pestis.